A 1030-amino-acid polypeptide reads, in one-letter code: Toll-like receptor 9 (1030 aa).

An N-terminal signal peptide occupies residues 1 to 24; the sequence is MGPRCTLHPLSLLVQVTALAAALA. Residues 25–816 lie on the Extracellular side of the membrane; the sequence is QGRLPAFLPC…LCLDETLSWN (792 aa). The cysteines at positions 34 and 44 are disulfide-linked. 46–50 contacts DNA; that stretch reads WLFLK. LRR repeat units follow at residues 61–84, 86–109, 121–146, 149–165, 166–189, 197–220, 222–241, 242–267, 282–305, 307–331, 332–355, 362–385, 389–412, 414–439, 469–493, 495–518, 519–542, 544–571, 573–597, 599–621, 626–649, 651–674, 675–698, 700–722, 723–746, and 748–771; these read RANV…DFVH, SSLR…HFPC, VPTL…SLVS, LSRT…LTGL, HALR…ALEV, LGNL…LPPS, ETLL…DLAN, LTAL…CREC, LSRL…WFRG, DRLQ…AFQG, LARL…HLHL, LRSL…TLQP, LPML…IFGA, PGLL…TREV, CKAF…MFAR, SRLE…QFVP, LTSL…SFTE, PRLE…SFVA, LPAL…LCSA, LCAL…LYLR, LRSL…ALDN, PKSL…SLTL, LPKL…SLPS, TQLR…FFAL, AKQL…WFGS, and VGNL…TFVG. Asparagine 63 is a glycosylation site (N-linked (GlcNAc...) asparagine). Residues 71–76 and 94–108 each bind DNA; these read SNRIHH and KWNC…MHFP. Residues cysteine 97 and cysteine 109 are joined by a disulfide bond. N-linked (GlcNAc...) asparagine glycosylation occurs at asparagine 128. Residues tyrosine 131, arginine 151, and 178–180 each bind DNA; that span reads YYK. Cysteine 177 and cysteine 183 are disulfide-bonded. Residue asparagine 199 is glycosylated (N-linked (GlcNAc...) asparagine). DNA is bound at residue tyrosine 207. Asparagine 209 and asparagine 241 each carry an N-linked (GlcNAc...) asparagine glycan. 2 disulfides stabilise this stretch: cysteine 254–cysteine 267 and cysteine 257–cysteine 264. Cysteine 257 carries S-palmitoyl cysteine lipidation. Arginine 261 provides a ligand contact to DNA. Cysteine 264 carries the S-palmitoyl cysteine lipid modification. Asparagine 339 is a glycosylation site (N-linked (GlcNAc...) asparagine). Cysteine 469 and cysteine 499 are oxidised to a cystine. Residue asparagine 512 is glycosylated (N-linked (GlcNAc...) asparagine). Asparagine 566 is a glycosylation site (N-linked (GlcNAc...) asparagine). N-linked (GlcNAc...) asparagine glycans are attached at residues asparagine 668 and asparagine 693. Residue asparagine 730 is glycosylated (N-linked (GlcNAc...) asparagine). Disulfide bonds link cysteine 763–cysteine 789 and cysteine 765–cysteine 808. A helical membrane pass occupies residues 817–837; sequence CFGISLLAMALGLVVPMLHHL. Residues 838–1030 lie on the Cytoplasmic side of the membrane; it reads CGWDLWYCFH…NFCRGPTTAE (193 aa). The region spanning 865 to 1010 is the TIR domain; it reads LFYDAFVVFD…SFWAQLGTAL (146 aa).

It belongs to the Toll-like receptor family. Monomer and homodimer. Exists as a monomer in the absence of unmethylated cytidine-phosphate-guanosine (CpG) ligand. Proteolytic processing of an insertion loop (Z-loop) is required for homodimerization upon binding to the unmethylated CpG ligand leading to its activation. Interacts with MYD88 via their respective TIR domains. Interacts with BTK. Interacts (via transmembrane domain) with UNC93B1. Interacts with CD300LH; the interaction may promote full activation of TLR9-triggered innate responses. Interacts with CNPY3 and HSP90B1; this interaction is required for proper folding in the endoplasmic reticulum. Interacts with SMPDL3B. Interacts with CD82; this interaction is essential for TLR9-dependent myddosome formation in response to CpG stimulation. Post-translationally, activated by proteolytic cleavage of the flexible loop between repeats LRR14 and LRR15 within the ectodomain. Cleavage requires UNC93B1. Proteolytically processed by first removing the majority of the ectodomain by either asparagine endopeptidase (AEP) or a cathepsin followed by a trimming event that is solely cathepsin mediated and required for optimal receptor signaling. In terms of processing, palmitoylated by ZDHHC3 in the Golgi regulates TLR9 trafficking from the Golgi to endosomes. Depalmitoylation by PPT1 controls the release of TLR9 from UNC93B1 in endosomes.

It localises to the endoplasmic reticulum membrane. The protein localises to the endosome. Its subcellular location is the lysosome. The protein resides in the cytoplasmic vesicle. It is found in the phagosome. Key component of innate and adaptive immunity. TLRs (Toll-like receptors) control host immune response against pathogens through recognition of molecular patterns specific to microorganisms. TLR9 is a nucleotide-sensing TLR which is activated by unmethylated cytidine-phosphate-guanosine (CpG) dinucleotides. Acts via MYD88 and TRAF6, leading to NF-kappa-B activation, cytokine secretion and the inflammatory response. Upon CpG stimulation, induces B-cell proliferation, activation, survival and antibody production. The polypeptide is Toll-like receptor 9 (TLR9) (Sus scrofa (Pig)).